We begin with the raw amino-acid sequence, 146 residues long: Aminoglycoside N(6')-acetyltransferase type 1 (146 aa).

Residues 1 to 146 form the N-acetyltransferase domain; it reads MNIMPVSESL…RVVYFKKHIG (146 aa). Residues W22, H25, Y66, and E79 each contribute to the substrate site. Residue 81 to 83 coordinates acetyl-CoA; the sequence is IYV. D115 provides a ligand contact to substrate. Position 120 (N120) interacts with acetyl-CoA. A substrate-binding site is contributed by E136.

As to quaternary structure, homodimer.

It carries out the reaction kanamycin B + acetyl-CoA = N(6')-acetylkanamycin B + CoA + H(+). Catalyzes the transfer of an acetyl group from acetyl-CoA to the 6'-amino group of aminoglycoside molecules conferring resistance to antibiotics containing the purpurosamine ring including amikacin, kanamycin, tobramycin and netilmicin. This Acinetobacter genomosp. 13 protein is Aminoglycoside N(6')-acetyltransferase type 1.